Here is a 290-residue protein sequence, read N- to C-terminus: Pyridoxal kinase PdxY (290 aa).

Substrate contacts are provided by residues Ser9 and 44 to 45 (TQ). Asp112, Val144, Glu149, and Lys182 together coordinate ATP. Asp221 lines the substrate pocket.

This sequence belongs to the pyridoxine kinase family. PdxY subfamily. Homodimer. Requires Mg(2+) as cofactor.

It catalyses the reaction pyridoxal + ATP = pyridoxal 5'-phosphate + ADP + H(+). The protein operates within cofactor metabolism; pyridoxal 5'-phosphate salvage; pyridoxal 5'-phosphate from pyridoxal: step 1/1. Pyridoxal kinase involved in the salvage pathway of pyridoxal 5'-phosphate (PLP). Catalyzes the phosphorylation of pyridoxal to PLP. The chain is Pyridoxal kinase PdxY from Vibrio vulnificus (strain CMCP6).